The following is a 443-amino-acid chain: Dihydroorotase (443 aa).

Residues His80 and His82 each contribute to the Zn(2+) site. Substrate is bound by residues 82–84 (HFR) and Asn114. 3 residues coordinate Zn(2+): Asp170, His197, and His251. Substrate is bound at residue Asn297. Asp324 is a binding site for Zn(2+). Residue Asp324 is part of the active site. Substrate is bound by residues His328 and 342 to 343 (FG).

This sequence belongs to the metallo-dependent hydrolases superfamily. DHOase family. Class I DHOase subfamily. Requires Zn(2+) as cofactor.

The catalysed reaction is (S)-dihydroorotate + H2O = N-carbamoyl-L-aspartate + H(+). It functions in the pathway pyrimidine metabolism; UMP biosynthesis via de novo pathway; (S)-dihydroorotate from bicarbonate: step 3/3. Its function is as follows. Catalyzes the reversible cyclization of carbamoyl aspartate to dihydroorotate. This chain is Dihydroorotase, found in Wolbachia sp. subsp. Brugia malayi (strain TRS).